Consider the following 131-residue polypeptide: Fumarate reductase subunit C (131 aa).

The next 2 helical transmembrane spans lie at 60–80 and 110–130; these read FVGF…LAAA and IKGL…VALF.

It belongs to the FrdC family. As to quaternary structure, part of an enzyme complex containing four subunits: a flavoprotein (FrdA), an iron-sulfur protein (FrdB), and two hydrophobic anchor proteins (FrdC and FrdD).

It is found in the cell inner membrane. Functionally, two distinct, membrane-bound, FAD-containing enzymes are responsible for the catalysis of fumarate and succinate interconversion; fumarate reductase is used in anaerobic growth, and succinate dehydrogenase is used in aerobic growth. Anchors the catalytic components of the fumarate reductase complex to the cell inner membrane, binds quinones. The sequence is that of Fumarate reductase subunit C from Enterobacter sp. (strain 638).